The sequence spans 324 residues: Holliday junction branch migration complex subunit RuvB (324 aa).

The large ATPase domain (RuvB-L) stretch occupies residues 1–168 (MEDLALRPKT…FGIVEHLEYY (168 aa)). Positions 14, 15, 48, 51, 52, 53, 97, 146, 168, and 205 each coordinate ATP. Thr-52 contributes to the Mg(2+) binding site. The interval 169 to 239 (TPEELAQGVM…RALEALAALG (71 aa)) is small ATPAse domain (RuvB-S). Positions 242–324 (ELGLEKRDRE…PPPVGPLLEP (83 aa)) are head domain (RuvB-H). The DNA site is built by Arg-297 and Arg-302.

Belongs to the RuvB family. In terms of assembly, homohexamer. Forms a complex with RuvA. Electron microscopic images suggest 2 closely interacting RuvA tetramers sandwich the HJ DNA; each tetramer associates with an RuvB hexamer. Forms 2 complexes with Holliday junction (HJ) DNA which probably have 1 and 2 RuvA tetramers per complex (called complex I and complex II). Forms an RuvA(8)-RuvB(12)-Holliday junction (HJ) complex. HJ DNA is sandwiched between 2 RuvA tetramers; dsDNA enters through RuvA and exits via RuvB. An RuvB hexamer assembles on each DNA strand where it exits the tetramer. Each RuvB hexamer is contacted by two RuvA subunits (via domain III) on 2 adjacent RuvB subunits; this complex drives branch migration. In the full resolvosome a probable DNA-RuvA(4)-RuvB(12)-RuvC(2) complex forms which resolves the HJ. Requires Mg(2+) as cofactor.

Its subcellular location is the cytoplasm. The catalysed reaction is ATP + H2O = ADP + phosphate + H(+). The activity of RuvB is enhanced by E.coli RuvA. Functionally, the RuvA-RuvB-RuvC complex processes Holliday junction (HJ) DNA during genetic recombination and DNA repair, while the RuvA-RuvB complex plays an important role in the rescue of blocked DNA replication forks via replication fork reversal (RFR). RuvA specifically binds to HJ cruciform DNA, conferring on it an open structure. The RuvB hexamer acts as an ATP-dependent pump, pulling dsDNA into and through the RuvAB complex. RuvB forms 2 homohexamers on either side of HJ DNA bound by 1 or 2 RuvA tetramers; 4 subunits per hexamer contact DNA at a time. Coordinated motions by a converter formed by DNA-disengaged RuvB subunits stimulates ATP hydrolysis and nucleotide exchange. Immobilization of the converter enables RuvB to convert the ATP-contained energy into a lever motion, pulling 2 nucleotides of DNA out of the RuvA tetramer per ATP hydrolyzed, thus driving DNA branch migration. The RuvB motors rotate together with the DNA substrate, which together with the progressing nucleotide cycle form the mechanistic basis for DNA recombination by continuous HJ branch migration. Branch migration allows RuvC to scan DNA until it finds its consensus sequence, where it cleaves and resolves cruciform DNA. Its function is as follows. RuvB is a Mg(2+)-dependent, DNA-dependent ATPase with an equal preference for supercoiled and linear dsDNA; all (d)NTPs tested were efficiently hydrolyzed. Promotes Holliday junction (HJ) dissociation at 60 degrees Celsius in the presence of ATP but not ATP-gamma-S or ADP; (d)ATP, (d)CTP and dTTP also power dissociation in the absence of any RuvA. RuvA stimulates the ATPase of RuvB in the presence of dsDNA and HJ branch migration by RuvB. Excess RuvB stimulates some branch migration in vitro even in the presence of mutant RuvA. This Thermus thermophilus (strain ATCC 27634 / DSM 579 / HB8) protein is Holliday junction branch migration complex subunit RuvB.